The following is a 408-amino-acid chain: MIEVLLVTICLAVFPYQGSSIILESGNVNDYEVVYPRKVTELPKGAVQPKYEDAMQYEFKVNGEPVVLHLEKNKGLFSEDYSETHYSPDGRKIITYPSFEDHCYYHGRIENDADSTASISACNGLKGHFKLQGETYLIEPLKLSDSEAHAVYKYENVEKEDEAPKMCGVTETNWESYEPIKKASQSNLTPEQQRFSPRYIELAVVADHGIFTKYNSNLNTIRTRVHEMLNTVNGFYRSVDVHAPLANLEVWSKQDLIKVQKDSSKTLKSFGEWRERDLLPRISHDHAQLLTAVVFDGNTIGRAYTGGMCDPRHSVGVVRDHSKNNLWVAVTMAHELGHNLGIHHDTGSCSCGAKSCIMASVLSKVLSYEFSDCSQNQYETYLTNHNPQCILNKPLLTVSGNELLEAGE.

The N-terminal stretch at 1–20 (MIEVLLVTICLAVFPYQGSS) is a signal peptide. The propeptide occupies 21 to 191 (IILESGNVND…KASQSNLTPE (171 aa)). Glutamine 192 carries the post-translational modification Pyrrolidone carboxylic acid. A Peptidase M12B domain is found at 198 to 394 (RYIELAVVAD…HNPQCILNKP (197 aa)). Cystine bridges form between cysteine 309–cysteine 389, cysteine 349–cysteine 373, and cysteine 351–cysteine 356. Histidine 334 contacts Zn(2+). The active site involves glutamate 335. Positions 338 and 344 each coordinate Zn(2+). A propeptide spanning residues 395 to 408 (LLTVSGNELLEAGE) is cleaved from the precursor.

Belongs to the venom metalloproteinase (M12B) family. P-I subfamily. As to quaternary structure, monomer. Requires Zn(2+) as cofactor. Expressed by the venom gland.

Its subcellular location is the secreted. Its activity is regulated as follows. Inhibited by EDTA, partially inhibited by o-phenantropine, and not inhibited by PMSF, pepstatin A, and aprotinin. In terms of biological role, zinc metalloprotease that exhibits a weak hemorrhagic activity (with a minimum hemorrhagic dose of 20 ug by intradermal and intramuscular injection into mice). The basal membrane components collagen (all chains of type IV) (COL4A4), laminin and nidogen are all degraded by this toxin. Rapidly degrades the Aalpha-chain (FGA) of fibrinogen, and later on, degrades the Bbeta-chain (FGB) of fibrinogen. Also activates the complement system, and induces rat neutrophil chemotaxis. Induces edema in mouse food pad and shows a mild myotoxicity. This chain is Snake venom metalloproteinase BaP1, found in Bothrops asper (Terciopelo).